A 38-amino-acid chain; its full sequence is Anthranilate phosphoribosyltransferase (38 aa).

Belongs to the anthranilate phosphoribosyltransferase family. As to quaternary structure, homodimer.

It carries out the reaction N-(5-phospho-beta-D-ribosyl)anthranilate + diphosphate = 5-phospho-alpha-D-ribose 1-diphosphate + anthranilate. It functions in the pathway amino-acid biosynthesis; L-tryptophan biosynthesis; L-tryptophan from chorismate: step 2/5. In terms of biological role, catalyzes the transfer of the phosphoribosyl group of 5-phosphorylribose-1-pyrophosphate (PRPP) to anthranilate to yield N-(5'-phosphoribosyl)-anthranilate (PRA). This is Anthranilate phosphoribosyltransferase (trpD) from Serratia marcescens.